We begin with the raw amino-acid sequence, 30 residues long: Dicynthaurin (30 aa).

Residue threonine 30 is modified to Threonine amide.

Homodimer.

It is found in the secreted. Shows antibacterial activity against both Gram-positive and Gram-negative bacteria. Its antimicrobial activity is optimal at NaCl concentrations below 100 mM, suggesting that the antimicrobial actions of this peptide may take place intracellularly rather than extracellularly. Has no activity against the fungus C.albicans. Has modest hemolytic activity. The polypeptide is Dicynthaurin (Halocynthia aurantium (Sea peach)).